The chain runs to 141 residues: Galactose-6-phosphate isomerase subunit LacA (141 aa).

Belongs to the LacAB/RpiB family. As to quaternary structure, heteromultimeric protein consisting of LacA and LacB.

The catalysed reaction is aldehydo-D-galactose 6-phosphate = keto-D-tagatose 6-phosphate. It participates in carbohydrate metabolism; D-galactose 6-phosphate degradation; D-tagatose 6-phosphate from D-galactose 6-phosphate: step 1/1. The chain is Galactose-6-phosphate isomerase subunit LacA from Streptococcus pneumoniae (strain Taiwan19F-14).